A 347-amino-acid chain; its full sequence is Protein N-terminal asparagine amidohydrolase (347 aa).

It carries out the reaction N-terminal L-asparaginyl-[protein] + H2O + H(+) = N-terminal L-aspartyl-[protein] + NH4(+). N-terminal asparagine deamidase that mediates deamidation of N-terminal asparagine residues to aspartate. Required for the ubiquitin-dependent turnover of intracellular proteins that initiate with Met-Asn. These proteins are acetylated on the retained initiator methionine and can subsequently be modified by the removal of N-acetyl methionine by acylaminoacid hydrolase (AAH). Conversion of the resulting N-terminal asparagine to aspartate by NTAN1 renders the protein susceptible to arginylation, polyubiquitination and degradation as specified by the N-end rule. This enzyme does not act on substrates with internal or C-terminal asparagines and does not act on glutamine residues in any position. Does not seem to be involved in immune response, unlike the N-terminal glutamine amidohydrolase NTAQ1. In Arabidopsis thaliana (Mouse-ear cress), this protein is Protein N-terminal asparagine amidohydrolase.